A 399-amino-acid chain; its full sequence is Acetate kinase (399 aa).

Asn7 serves as a coordination point for Mg(2+). Lys14 is an ATP binding site. Arg91 serves as a coordination point for substrate. Asp148 (proton donor/acceptor) is an active-site residue. Residues 208–212 (HLGNG), 283–285 (DFR), and 331–335 (GIGEN) contribute to the ATP site. Glu384 is a binding site for Mg(2+).

Belongs to the acetokinase family. Homodimer. Mg(2+) is required as a cofactor. Requires Mn(2+) as cofactor.

It localises to the cytoplasm. The catalysed reaction is acetate + ATP = acetyl phosphate + ADP. Its pathway is metabolic intermediate biosynthesis; acetyl-CoA biosynthesis; acetyl-CoA from acetate: step 1/2. In terms of biological role, catalyzes the formation of acetyl phosphate from acetate and ATP. Can also catalyze the reverse reaction. The protein is Acetate kinase of Acetivibrio thermocellus (strain ATCC 27405 / DSM 1237 / JCM 9322 / NBRC 103400 / NCIMB 10682 / NRRL B-4536 / VPI 7372) (Clostridium thermocellum).